Here is a 179-residue protein sequence, read N- to C-terminus: Acireductone dioxygenase (179 aa).

Residues 1–23 are disordered; it reads MVQAWYMDESTADPRMPHRAQPD. Fe(2+) contacts are provided by H88, H90, E94, and H133. 4 residues coordinate Ni(2+): H88, H90, E94, and H133.

Belongs to the acireductone dioxygenase (ARD) family. In terms of assembly, monomer. Interacts with MMP14. Fe(2+) serves as cofactor. Requires Ni(2+) as cofactor. In terms of tissue distribution, detected in prostate, liver, heart, brain, muscle, kidney and seminal vesicles.

The protein localises to the cytoplasm. Its subcellular location is the nucleus. It localises to the cell membrane. The enzyme catalyses 1,2-dihydroxy-5-(methylsulfanyl)pent-1-en-3-one + O2 = 4-methylsulfanyl-2-oxobutanoate + formate + 2 H(+). It catalyses the reaction 1,2-dihydroxy-5-(methylsulfanyl)pent-1-en-3-one + O2 = 3-(methylsulfanyl)propanoate + CO + formate + 2 H(+). It functions in the pathway amino-acid biosynthesis; L-methionine biosynthesis via salvage pathway; L-methionine from S-methyl-5-thio-alpha-D-ribose 1-phosphate: step 5/6. Functionally, catalyzes 2 different reactions between oxygen and the acireductone 1,2-dihydroxy-3-keto-5-methylthiopentene (DHK-MTPene) depending upon the metal bound in the active site. Fe-containing acireductone dioxygenase (Fe-ARD) produces formate and 2-keto-4-methylthiobutyrate (KMTB), the alpha-ketoacid precursor of methionine in the methionine recycle pathway. Ni-containing acireductone dioxygenase (Ni-ARD) produces methylthiopropionate, carbon monoxide and formate, and does not lie on the methionine recycle pathway. Also down-regulates cell migration mediated by MMP14. This chain is Acireductone dioxygenase (Adi1), found in Rattus norvegicus (Rat).